The primary structure comprises 244 residues: Flavin-dependent thymidylate synthase (244 aa).

The ThyX domain occupies 2-207 (VRVTLVNYTK…DIRPIIKWAK (206 aa)). Residues S56, 80-82 (RHR), and Q88 contribute to the FAD site. DUMP is bound by residues 77–80 (QLVR), 88–92 (QQSQR), and R146. The short motif at 80 to 90 (RHRIASYTQQS) is the ThyX motif element. FAD is bound by residues 162-164 (NLR) and H168. Residue R173 participates in dUMP binding. R173 serves as the catalytic Involved in ionization of N3 of dUMP, leading to its activation.

This sequence belongs to the thymidylate synthase ThyX family. Homotetramer. Requires FAD as cofactor.

The enzyme catalyses dUMP + (6R)-5,10-methylene-5,6,7,8-tetrahydrofolate + NADPH + H(+) = dTMP + (6S)-5,6,7,8-tetrahydrofolate + NADP(+). It participates in pyrimidine metabolism; dTTP biosynthesis. Catalyzes the reductive methylation of 2'-deoxyuridine-5'-monophosphate (dUMP) to 2'-deoxythymidine-5'-monophosphate (dTMP) while utilizing 5,10-methylenetetrahydrofolate (mTHF) as the methyl donor, and NADPH and FADH(2) as the reductant. The chain is Flavin-dependent thymidylate synthase from Pyrococcus furiosus (strain ATCC 43587 / DSM 3638 / JCM 8422 / Vc1).